A 332-amino-acid chain; its full sequence is Glyoxylate reductase (332 aa).

Residues 155-158 (MGRI) and 236-238 (TSR) each bind NADP(+). Active-site residues include Arg238 and Glu267. The Proton donor role is filled by His286. 286-288 (HAA) contacts NADP(+).

It belongs to the D-isomer specific 2-hydroxyacid dehydrogenase family. GyaR subfamily. Homodimer.

Its subcellular location is the cytoplasm. The enzyme catalyses glycolate + NAD(+) = glyoxylate + NADH + H(+). The protein is Glyoxylate reductase of Korarchaeum cryptofilum (strain OPF8).